Reading from the N-terminus, the 351-residue chain is Histidinol-phosphate aminotransferase (351 aa).

Lysine 209 carries the N6-(pyridoxal phosphate)lysine modification.

It belongs to the class-II pyridoxal-phosphate-dependent aminotransferase family. Histidinol-phosphate aminotransferase subfamily. In terms of assembly, homodimer. Pyridoxal 5'-phosphate is required as a cofactor.

It catalyses the reaction L-histidinol phosphate + 2-oxoglutarate = 3-(imidazol-4-yl)-2-oxopropyl phosphate + L-glutamate. Its pathway is amino-acid biosynthesis; L-histidine biosynthesis; L-histidine from 5-phospho-alpha-D-ribose 1-diphosphate: step 7/9. This is Histidinol-phosphate aminotransferase from Chromohalobacter salexigens (strain ATCC BAA-138 / DSM 3043 / CIP 106854 / NCIMB 13768 / 1H11).